Reading from the N-terminus, the 689-residue chain is Glycine--tRNA ligase beta subunit (689 aa).

The protein belongs to the class-II aminoacyl-tRNA synthetase family. Tetramer of two alpha and two beta subunits.

It is found in the cytoplasm. It carries out the reaction tRNA(Gly) + glycine + ATP = glycyl-tRNA(Gly) + AMP + diphosphate. This Enterobacter sp. (strain 638) protein is Glycine--tRNA ligase beta subunit.